The chain runs to 148 residues: Protein NrdI (148 aa).

It belongs to the NrdI family.

Probably involved in ribonucleotide reductase function. The sequence is that of Protein NrdI from Corynebacterium glutamicum (strain R).